Consider the following 257-residue polypeptide: MAHSQVGIQLISESTEKTLAELTALCAEYNIIHNEKSPLALVQTDERLELRKLDEPKLRAVYVDFIGGTMAHRRKFGGGRGEAVAKAVGIKGSALPTVIDATAGLGRDAFVLAAIGCQVRLVERHPVVFLLLQDGLNRAYQDEEIGEILQQNLRLLNVHHINELDPNSDYADVVYLDPMYPHKQKSALVKKEMRVFQHLVGADLDADELLLPALQLAKKRVVVKRPDYAEFLCGKQPHFSRETKNHRFDIYMGASQC.

Residues 107–108, 123–124, and aspartate 177 each bind S-adenosyl-L-methionine; these read RD and ER.

Belongs to the methyltransferase superfamily. RsmJ family.

Its subcellular location is the cytoplasm. The catalysed reaction is guanosine(1516) in 16S rRNA + S-adenosyl-L-methionine = N(2)-methylguanosine(1516) in 16S rRNA + S-adenosyl-L-homocysteine + H(+). Its function is as follows. Specifically methylates the guanosine in position 1516 of 16S rRNA. This chain is Ribosomal RNA small subunit methyltransferase J, found in Haemophilus influenzae (strain PittGG).